Reading from the N-terminus, the 702-residue chain is Polyphosphate kinase (702 aa).

Residue asparagine 55 coordinates ATP. Positions 389 and 419 each coordinate Mg(2+). Histidine 449 functions as the Phosphohistidine intermediate in the catalytic mechanism. ATP-binding residues include tyrosine 482, arginine 578, and histidine 606.

It belongs to the polyphosphate kinase 1 (PPK1) family. It depends on Mg(2+) as a cofactor. An intermediate of this reaction is the autophosphorylated ppk in which a phosphate is covalently linked to a histidine residue through a N-P bond.

It catalyses the reaction [phosphate](n) + ATP = [phosphate](n+1) + ADP. Functionally, catalyzes the reversible transfer of the terminal phosphate of ATP to form a long-chain polyphosphate (polyP). This chain is Polyphosphate kinase, found in Bacillus cereus (strain ATCC 14579 / DSM 31 / CCUG 7414 / JCM 2152 / NBRC 15305 / NCIMB 9373 / NCTC 2599 / NRRL B-3711).